A 197-amino-acid polypeptide reads, in one-letter code: Cell division protein SepF (197 aa).

Positions 15-91 (DEEEVESPEE…PPSKSNGKNV (77 aa)) are disordered. Basic and acidic residues predominate over residues 22 to 31 (PEERQRRVVQ). Residues 37–47 (TNNVQQNQPQQ) are compositionally biased toward low complexity. Polar residues-rich tracts occupy residues 48–58 (SERSYSNQSKL) and 78–91 (RMNQ…GKNV).

The protein belongs to the SepF family. Homodimer. Interacts with FtsZ.

The protein localises to the cytoplasm. Its function is as follows. Cell division protein that is part of the divisome complex and is recruited early to the Z-ring. Probably stimulates Z-ring formation, perhaps through the cross-linking of FtsZ protofilaments. Its function overlaps with FtsA. In Staphylococcus haemolyticus (strain JCSC1435), this protein is Cell division protein SepF.